Reading from the N-terminus, the 683-residue chain is Glycine--tRNA ligase beta subunit (683 aa).

It belongs to the class-II aminoacyl-tRNA synthetase family. In terms of assembly, tetramer of two alpha and two beta subunits.

It is found in the cytoplasm. It carries out the reaction tRNA(Gly) + glycine + ATP = glycyl-tRNA(Gly) + AMP + diphosphate. The protein is Glycine--tRNA ligase beta subunit of Pseudomonas putida (strain W619).